A 217-amino-acid polypeptide reads, in one-letter code: Probable transaldolase (217 aa).

Lys83 functions as the Schiff-base intermediate with substrate in the catalytic mechanism.

The protein belongs to the transaldolase family. Type 3B subfamily.

The protein localises to the cytoplasm. The enzyme catalyses D-sedoheptulose 7-phosphate + D-glyceraldehyde 3-phosphate = D-erythrose 4-phosphate + beta-D-fructose 6-phosphate. It participates in carbohydrate degradation; pentose phosphate pathway; D-glyceraldehyde 3-phosphate and beta-D-fructose 6-phosphate from D-ribose 5-phosphate and D-xylulose 5-phosphate (non-oxidative stage): step 2/3. Transaldolase is important for the balance of metabolites in the pentose-phosphate pathway. This Coprothermobacter proteolyticus (strain ATCC 35245 / DSM 5265 / OCM 4 / BT) protein is Probable transaldolase.